The chain runs to 2153 residues: RNA-directed RNA polymerase L (2153 aa).

The Mn(2+) site is built by His36, Glu54, Asp97, Glu110, and Val111. The For endonuclease activity role is filled by Lys124. The 187-residue stretch at 957 to 1143 (TGKSIKFKRK…AINQEMWKSM (187 aa)) folds into the RdRp catalytic domain. Asp1100 is a Mg(2+) binding site.

It belongs to the Bunyavirales RNA polymerase family. As to quaternary structure, interacts with the viral nucleoprotein. It depends on Mn(2+) as a cofactor. Requires Mg(2+) as cofactor.

Its subcellular location is the host cytoplasm. It localises to the host perinuclear region. The enzyme catalyses RNA(n) + a ribonucleoside 5'-triphosphate = RNA(n+1) + diphosphate. RNA-dependent RNA polymerase, which is responsible for the replication and transcription of the viral RNA genome using antigenomic RNA as an intermediate. During transcription, synthesizes subgenomic RNAs and assures their capping by a cap-snatching mechanism, which involves the endonuclease activity cleaving the host capped pre-mRNAs. These short capped RNAs are then used as primers for viral transcription. Cleaves ssRNA substrates but not DNA. Seems to downregulate the expression of its own and heterologous mRNAs through its endonuclease activity. The protein is RNA-directed RNA polymerase L of Abrothrix longipilis (Long-haired grass mouse).